A 131-amino-acid chain; its full sequence is Profilin-2 (131 aa).

A disulfide bridge connects residues C13 and C115. Positions 81-97 match the Involved in PIP2 interaction motif; it reads AVIRGKKGPGGVTVKKT. Residue T111 is modified to Phosphothreonine.

The protein belongs to the profilin family. In terms of assembly, multimer. Occurs in many kinds of cells as a complex with monomeric actin in a 1:1 ratio. In terms of processing, phosphorylated by MAP kinases.

The protein localises to the cytoplasm. It is found in the cytoskeleton. Functionally, binds to actin and affects the structure of the cytoskeleton. At high concentrations, profilin prevents the polymerization of actin, whereas it enhances it at low concentrations. By binding to PIP2, it inhibits the formation of IP3 and DG. The protein is Profilin-2 of Hevea brasiliensis (Para rubber tree).